Consider the following 244-residue polypeptide: Orotidine 5'-phosphate decarboxylase (244 aa).

Residues Asp-14, Lys-36, 63–72 (DLKFHDIPNT), Thr-127, Arg-188, Gln-197, Gly-217, and Arg-218 contribute to the substrate site. Lys-65 functions as the Proton donor in the catalytic mechanism.

The protein belongs to the OMP decarboxylase family. Type 1 subfamily. Homodimer.

It carries out the reaction orotidine 5'-phosphate + H(+) = UMP + CO2. The protein operates within pyrimidine metabolism; UMP biosynthesis via de novo pathway; UMP from orotate: step 2/2. Its function is as follows. Catalyzes the decarboxylation of orotidine 5'-monophosphate (OMP) to uridine 5'-monophosphate (UMP). This is Orotidine 5'-phosphate decarboxylase from Syntrophotalea carbinolica (strain DSM 2380 / NBRC 103641 / GraBd1) (Pelobacter carbinolicus).